Here is a 70-residue protein sequence, read N- to C-terminus: Small ribosomal subunit protein bS21B (70 aa).

The protein belongs to the bacterial ribosomal protein bS21 family.

This chain is Small ribosomal subunit protein bS21B, found in Paraburkholderia xenovorans (strain LB400).